Reading from the N-terminus, the 266-residue chain is Probable sulfate transport system permease protein cysT (266 aa).

The next 7 helical transmembrane spans lie at 12–32 (ILLFYFFFLLILPVVVLFLLI), 59–79 (MAFYAALVNSIFGFIITWVLT), 91–111 (AAVDLPFALPTSVAGLTLATV), 129–149 (IVFTKIGVLLAMIFVSFPFVI), 181–201 (VILPTLWPALFTGFTLSFSRA), 206–226 (GSIVMISSNLPFKDLVASVLI), and 236–256 (LGASVIGAVVLLIALFTLLLI). The region spanning 53–257 (YLLTVQMAFY…IALFTLLLIN (205 aa)) is the ABC transmembrane type-1 domain.

The protein belongs to the binding-protein-dependent transport system permease family. CysTW subfamily.

The protein resides in the plastid. The protein localises to the chloroplast membrane. Part of the ABC transporter complex cysAWTP (TC 3.A.1.6.1) involved in sulfate/thiosulfate import. Probably responsible for the translocation of the substrate across the membrane. The polypeptide is Probable sulfate transport system permease protein cysT (cysT) (Chlorella vulgaris (Green alga)).